The sequence spans 56 residues: Male-specific sperm protein Mst87F (56 aa).

It belongs to the MST(3)CGP family. As to expression, testis.

The sequence is that of Male-specific sperm protein Mst87F (Mst87F) from Drosophila melanogaster (Fruit fly).